A 233-amino-acid chain; its full sequence is Pirin-like protein YhaK (233 aa).

It belongs to the pirin family. Monomer.

It localises to the cytoplasm. Functionally, does not have quercetin 2,3-dioxygenase activity. The sequence is that of Pirin-like protein YhaK (yhaK) from Escherichia coli (strain K12).